We begin with the raw amino-acid sequence, 300 residues long: Dioxygenase FUM3 (300 aa).

The Fe cation site is built by histidine 146, aspartate 148, and histidine 222.

The protein belongs to the PhyH family. Homodimer. It depends on Fe cation as a cofactor.

Its pathway is mycotoxin biosynthesis. In terms of biological role, dioxygenase; part of the gene cluster that mediates the biosynthesis of fumonisins B1 (FB1), B2 (FB2), B3 (FB3), and B4 (FB4), which are carcinogenic mycotoxins. Within the pathway, FUM3 performs the C-5 hydroxylation present in FB1 and FB2 and which occurs late in the biosynthesis. The biosynthesis starts with the FUM1-catalyzed carbon chain assembly from one molecule of acetyl-CoA, eight molecules of malonyl-CoA, and two molecules of methionine (in S-adenosyl form). The C18 polyketide chain is released from the enzyme by a nucleophilic attack of a carbanion, which is derived from R-carbon of alanine by decarboxylation, on the carbonyl carbon of polyketide acyl chain. This step is catalyzed by the pyridoxal 5'-phosphate-dependent aminoacyl transferase FUM8. The resultant 3-keto intermediate is then stereospecifically reduced to a 3-hydroxyl product by reductase FUM13. Subsequent oxidations at C-10 by the cytochrome P450 monooxygenase FUM2, C-14 and C-15 by FUM6, FUM12 or FUM15, tricarballylic esterification of the hydroxyl groups on C-14 and C-15 by acyltransferase FUM14, and C-5 hydroxylation by 2-keto-glutarate-dependent dioxygenase FUM3 furnish the biosynthesis of fumonisins. The tricarballylic moieties are most likely derived from the citric acid cycle, and their addition to the carbon backbone may involve FUM7, FUM10, FUM11 and FUM14. The polypeptide is Dioxygenase FUM3 (Gibberella moniliformis (strain M3125 / FGSC 7600) (Maize ear and stalk rot fungus)).